We begin with the raw amino-acid sequence, 539 residues long: Effector protein hopAB1 (539 aa).

Disordered regions lie at residues M1 to Q93, Q163 to Q220, A230 to L249, and R315 to R336. Residues T18–S31 are compositionally biased toward basic and acidic residues. A compositionally biased stretch (low complexity) spans S181–S194.

It belongs to the HopAB family.

It is found in the secreted. Functionally, effector protein that plays different roles depending on the species and plant cultivars that interact with the pathogen. Acts as a virulence determinant by enhancing the development of disease symptoms and bacterial growth. Acts as an avirulence factor by eliciting hypersensitive response (HR) and plant resistance. The polypeptide is Effector protein hopAB1 (hopAB1) (Pseudomonas savastanoi pv. phaseolicola (strain 1448A / Race 6) (Pseudomonas syringae pv. phaseolicola (strain 1448A / Race 6))).